Here is a 344-residue protein sequence, read N- to C-terminus: Methionine import ATP-binding protein MetN 1 (344 aa).

The ABC transporter domain occupies 2-241 (IELRNLSQRF…PHHEVTRALI (240 aa)). 38–45 (GRSGAGKS) lines the ATP pocket.

It belongs to the ABC transporter superfamily. Methionine importer (TC 3.A.1.24) family. The complex is composed of two ATP-binding proteins (MetN), two transmembrane proteins (MetI) and a solute-binding protein (MetQ).

Its subcellular location is the cell inner membrane. It catalyses the reaction L-methionine(out) + ATP + H2O = L-methionine(in) + ADP + phosphate + H(+). The catalysed reaction is D-methionine(out) + ATP + H2O = D-methionine(in) + ADP + phosphate + H(+). Functionally, part of the ABC transporter complex MetNIQ involved in methionine import. Responsible for energy coupling to the transport system. This Burkholderia ambifaria (strain ATCC BAA-244 / DSM 16087 / CCUG 44356 / LMG 19182 / AMMD) (Burkholderia cepacia (strain AMMD)) protein is Methionine import ATP-binding protein MetN 1.